Here is a 320-residue protein sequence, read N- to C-terminus: Cytochrome f (320 aa).

The first 35 residues, 1–35 (MQTRNTFSWIKEEITRSISVSLMIYIITGASISNA), serve as a signal peptide directing secretion. Heme is bound by residues Y36, C56, C59, and H60. A helical membrane pass occupies residues 286–306 (VQGLLFFLASIVFAQIFLVLK).

The protein belongs to the cytochrome f family. The 4 large subunits of the cytochrome b6-f complex are cytochrome b6, subunit IV (17 kDa polypeptide, petD), cytochrome f and the Rieske protein, while the 4 small subunits are PetG, PetL, PetM and PetN. The complex functions as a dimer. It depends on heme as a cofactor.

Its subcellular location is the plastid. The protein localises to the chloroplast thylakoid membrane. Its function is as follows. Component of the cytochrome b6-f complex, which mediates electron transfer between photosystem II (PSII) and photosystem I (PSI), cyclic electron flow around PSI, and state transitions. In Gossypium barbadense (Sea Island cotton), this protein is Cytochrome f.